The primary structure comprises 689 residues: Glycine--tRNA ligase beta subunit (689 aa).

It belongs to the class-II aminoacyl-tRNA synthetase family. In terms of assembly, tetramer of two alpha and two beta subunits.

It is found in the cytoplasm. The catalysed reaction is tRNA(Gly) + glycine + ATP = glycyl-tRNA(Gly) + AMP + diphosphate. The protein is Glycine--tRNA ligase beta subunit of Salmonella schwarzengrund (strain CVM19633).